Here is a 209-residue protein sequence, read N- to C-terminus: Ribosomal RNA large subunit methyltransferase E (209 aa).

Gly63, Trp65, Asp83, Asp99, and Asp124 together coordinate S-adenosyl-L-methionine. Residue Lys164 is the Proton acceptor of the active site.

Belongs to the class I-like SAM-binding methyltransferase superfamily. RNA methyltransferase RlmE family.

It is found in the cytoplasm. The enzyme catalyses uridine(2552) in 23S rRNA + S-adenosyl-L-methionine = 2'-O-methyluridine(2552) in 23S rRNA + S-adenosyl-L-homocysteine + H(+). Its function is as follows. Specifically methylates the uridine in position 2552 of 23S rRNA at the 2'-O position of the ribose in the fully assembled 50S ribosomal subunit. This Shewanella pealeana (strain ATCC 700345 / ANG-SQ1) protein is Ribosomal RNA large subunit methyltransferase E.